The following is a 684-amino-acid chain: Pre-mRNA-splicing factor CLF1 (684 aa).

HAT repeat units follow at residues 43–75 (DWQR…FEFD), 77–109 (KDIR…SEIK), 111–143 (KNIN…LEES), 145–176 (GNQG…FETR), 178–209 (LNFE…FEQT), 211–251 (GDIS…WEAS), 253–285 (GEYE…FEKK), 295–327 (IVIA…LVEE), 332–364 (QLTS…ICVR), 374–410 (NDLP…FEIR), 412–443 (NNLL…LEIR), 445–477 (KEFD…LEEN), 518–550 (AEYE…FEST), and 584–622 (ENKH…YEKV).

Belongs to the crooked-neck family. Associated with the spliceosome.

It localises to the nucleus. Functionally, involved in pre-mRNA splicing and cell cycle progression. Required for the spliceosome assembly and initiation of the DNA replication. The polypeptide is Pre-mRNA-splicing factor CLF1 (CLF1) (Kluyveromyces lactis (strain ATCC 8585 / CBS 2359 / DSM 70799 / NBRC 1267 / NRRL Y-1140 / WM37) (Yeast)).